Consider the following 1238-residue polypeptide: Chitin synthase 4 (1238 aa).

Disordered stretches follow at residues 1 to 93 (MAEP…PERN) and 132 to 190 (TVSS…RRQK). Positions 14 to 34 (TRDKSHSPYRESPSRRLRDVE) are enriched in basic and acidic residues. The N-linked (GlcNAc...) asparagine glycan is linked to Asn-50. 2 stretches are compositionally biased toward polar residues: residues 71 to 80 (SNPNPMSQSD) and 133 to 142 (VSSGSTQQDT). Residues 175–190 (RKDTRNLTEEEKRRQK) show a composition bias toward basic and acidic residues. An N-linked (GlcNAc...) asparagine glycan is attached at Asn-180. 2 helical membrane-spanning segments follow: residues 200–220 (IWNI…LQCF) and 235–255 (VGLI…TFGF). N-linked (GlcNAc...) asparagine glycans are attached at residues Asn-365, Asn-404, and Asn-426. The chain crosses the membrane as a helical span at residues 487 to 507 (VVLYVSLVFILAIVAAKFFLA). Disordered stretches follow at residues 548–570 (PKIT…RGSM) and 582–606 (YAVD…AKLL). A compositionally biased stretch (polar residues) spans 553–562 (PASTVTGSDG). 3 N-linked (GlcNAc...) asparagine glycosylation sites follow: Asn-617, Asn-903, and Asn-1030. The next 3 helical transmembrane spans lie at 1062-1082 (IGTL…ILSI), 1087-1107 (VPVI…ILIV), and 1115-1135 (YILW…VLPA).

It belongs to the chitin synthase family. Class IV subfamily. In terms of processing, maximal activity requires trypsin activation, suggesting a zymogenic nature.

The protein localises to the cell membrane. The catalysed reaction is [(1-&gt;4)-N-acetyl-beta-D-glucosaminyl](n) + UDP-N-acetyl-alpha-D-glucosamine = [(1-&gt;4)-N-acetyl-beta-D-glucosaminyl](n+1) + UDP + H(+). Its activity is regulated as follows. Activity is stimulated by Mg(2+), and is more inhibited by polyoxin D than by nikkomycin. In terms of biological role, polymerizes chitin, a structural polymer of the cell wall and septum, by transferring the sugar moiety of UDP-GlcNAc to the non-reducing end of the growing chitin polymer. CHS4 synthesizes a large amount of chitin and appears to play a role in the process of cell separation. CHS4 is particularly well suited for functioning at the higher temperatures associated with its poorly characterized saprophic environment and with human infection. The chain is Chitin synthase 4 from Exophiala dermatitidis (Black yeast-like fungus).